The primary structure comprises 240 residues: UDP-2,3-diacylglucosamine hydrolase (240 aa).

Residues Asp-8, His-10, Asp-41, Asn-79, and His-114 each contribute to the Mn(2+) site. 79 to 80 (NR) serves as a coordination point for substrate. 5 residues coordinate substrate: Asp-122, Ser-160, Asn-164, Lys-167, and His-195. His-195 and His-197 together coordinate Mn(2+).

The protein belongs to the LpxH family. It depends on Mn(2+) as a cofactor.

It localises to the cell inner membrane. The enzyme catalyses UDP-2-N,3-O-bis[(3R)-3-hydroxytetradecanoyl]-alpha-D-glucosamine + H2O = 2-N,3-O-bis[(3R)-3-hydroxytetradecanoyl]-alpha-D-glucosaminyl 1-phosphate + UMP + 2 H(+). It participates in glycolipid biosynthesis; lipid IV(A) biosynthesis; lipid IV(A) from (3R)-3-hydroxytetradecanoyl-[acyl-carrier-protein] and UDP-N-acetyl-alpha-D-glucosamine: step 4/6. Its function is as follows. Hydrolyzes the pyrophosphate bond of UDP-2,3-diacylglucosamine to yield 2,3-diacylglucosamine 1-phosphate (lipid X) and UMP by catalyzing the attack of water at the alpha-P atom. Involved in the biosynthesis of lipid A, a phosphorylated glycolipid that anchors the lipopolysaccharide to the outer membrane of the cell. This chain is UDP-2,3-diacylglucosamine hydrolase, found in Shigella dysenteriae serotype 1 (strain Sd197).